The sequence spans 293 residues: Glutamyl-Q tRNA(Asp) synthetase (293 aa).

L-glutamate is bound by residues 4-8 and Glu40; that span reads RYAPS. A 'HIGH' region motif is present at residues 7 to 17; that stretch reads PSPSGDLHFGN. Residues Cys92, Cys94, Tyr113, and Cys117 each coordinate Zn(2+). L-glutamate-binding residues include Tyr180 and Arg198. Residues 236–240 carry the 'KMSKS' region motif; sequence RLAKR. Lys239 serves as a coordination point for ATP.

This sequence belongs to the class-I aminoacyl-tRNA synthetase family. GluQ subfamily. The cofactor is Zn(2+).

Catalyzes the tRNA-independent activation of glutamate in presence of ATP and the subsequent transfer of glutamate onto a tRNA(Asp). Glutamate is transferred on the 2-amino-5-(4,5-dihydroxy-2-cyclopenten-1-yl) moiety of the queuosine in the wobble position of the QUC anticodon. This chain is Glutamyl-Q tRNA(Asp) synthetase, found in Corynebacterium glutamicum (strain ATCC 13032 / DSM 20300 / JCM 1318 / BCRC 11384 / CCUG 27702 / LMG 3730 / NBRC 12168 / NCIMB 10025 / NRRL B-2784 / 534).